A 348-amino-acid polypeptide reads, in one-letter code: Interferon regulatory factor 2 (348 aa).

The segment at residues Arg-5–Pro-113 is a DNA-binding region (IRF tryptophan pentad repeat). Residues Lys-75 and Lys-78 each carry the N6-acetyllysine modification. The segment at Arg-117–Lys-137 is disordered. Positions Thr-125–Lys-137 are enriched in basic and acidic residues. Residues Lys-137, Lys-164, and Lys-291 each participate in a glycyl lysine isopeptide (Lys-Gly) (interchain with G-Cter in SUMO) cross-link. A disordered region spans residues Leu-311–Cys-348. Composition is skewed to polar residues over residues Val-314–Ser-323 and Asp-339–Cys-348.

It belongs to the IRF family. In terms of assembly, interacts with CREBBP in growing cells; the interaction acetylates IRF2 and regulates IRF2-dependent H4 promoter activity.

The protein localises to the nucleus. Functionally, specifically binds to the upstream regulatory region of type I IFN and IFN-inducible MHC class I genes (the interferon consensus sequence (ICS)) and represses those genes. Also acts as an activator for several genes including H4 and IL7. Constitutively binds to the ISRE promoter to activate IL7. Involved in cell cycle regulation through binding the site II (HiNF-M) promoter region of H4 and activating transcription during cell growth. Antagonizes IRF1 transcriptional activation. The chain is Interferon regulatory factor 2 (IRF2) from Gallus gallus (Chicken).